The following is a 314-amino-acid chain: Methionyl-tRNA formyltransferase (314 aa).

112-115 (SLLP) contacts (6S)-5,6,7,8-tetrahydrofolate.

Belongs to the Fmt family.

It carries out the reaction L-methionyl-tRNA(fMet) + (6R)-10-formyltetrahydrofolate = N-formyl-L-methionyl-tRNA(fMet) + (6S)-5,6,7,8-tetrahydrofolate + H(+). In terms of biological role, attaches a formyl group to the free amino group of methionyl-tRNA(fMet). The formyl group appears to play a dual role in the initiator identity of N-formylmethionyl-tRNA by promoting its recognition by IF2 and preventing the misappropriation of this tRNA by the elongation apparatus. This Legionella pneumophila (strain Corby) protein is Methionyl-tRNA formyltransferase.